A 187-amino-acid polypeptide reads, in one-letter code: Large ribosomal subunit protein bL17 (187 aa).

Residues 122-187 (PKVRSSRTST…EADAAEKSDK (66 aa)) form a disordered region. Low complexity predominate over residues 127–144 (SRTSTATAPVAAAPVAEA). Positions 145-157 (PAEESDVPVEETD) are enriched in acidic residues. The segment covering 167-176 (AETTDAAAAE) has biased composition (low complexity).

Belongs to the bacterial ribosomal protein bL17 family. In terms of assembly, part of the 50S ribosomal subunit. Contacts protein L32.

The protein is Large ribosomal subunit protein bL17 of Clavibacter sepedonicus (Clavibacter michiganensis subsp. sepedonicus).